The following is a 104-amino-acid chain: NADH-quinone oxidoreductase subunit K (104 aa).

3 helical membrane passes run 4-24 (VPASAYLTLAIILFCIGLFGA), 31-51 (VIVLVCIELMLNAVNLNLVAF), and 67-87 (LFTMAVAAAEAAVGLAILIAL).

It belongs to the complex I subunit 4L family. As to quaternary structure, NDH-1 is composed of 14 different subunits. Subunits NuoA, H, J, K, L, M, N constitute the membrane sector of the complex.

It localises to the cell membrane. The enzyme catalyses a quinone + NADH + 5 H(+)(in) = a quinol + NAD(+) + 4 H(+)(out). Functionally, NDH-1 shuttles electrons from NADH, via FMN and iron-sulfur (Fe-S) centers, to quinones in the respiratory chain. The immediate electron acceptor for the enzyme in this species is believed to be a menaquinone. Couples the redox reaction to proton translocation (for every two electrons transferred, four hydrogen ions are translocated across the cytoplasmic membrane), and thus conserves the redox energy in a proton gradient. The sequence is that of NADH-quinone oxidoreductase subunit K from Bacillus cereus (strain AH187).